Here is a 386-residue protein sequence, read N- to C-terminus: Eukaryotic translation initiation factor 3 subunit M (386 aa).

Residues 181–343 enclose the PCI domain; the sequence is NSELASKVMI…RKVHISSTMH (163 aa).

Belongs to the eIF-3 subunit M family. Component of the eukaryotic translation initiation factor 3 (eIF-3) complex.

It is found in the cytoplasm. Component of the eukaryotic translation initiation factor 3 (eIF-3) complex, which is involved in protein synthesis of a specialized repertoire of mRNAs and, together with other initiation factors, stimulates binding of mRNA and methionyl-tRNAi to the 40S ribosome. The eIF-3 complex specifically targets and initiates translation of a subset of mRNAs involved in cell proliferation. In Culex quinquefasciatus (Southern house mosquito), this protein is Eukaryotic translation initiation factor 3 subunit M.